Consider the following 99-residue polypeptide: Malonate decarboxylase acyl carrier protein (99 aa).

O-(phosphoribosyl dephospho-coenzyme A)serine is present on Ser25.

The protein belongs to the MdcC family. Covalently binds the prosthetic group of malonate decarboxylase.

The protein resides in the cytoplasm. Its function is as follows. Subunit of malonate decarboxylase, it is an acyl carrier protein to which acetyl and malonyl thioester residues are bound via a 2'-(5''-phosphoribosyl)-3'-dephospho-CoA prosthetic group and turn over during the catalytic mechanism. The protein is Malonate decarboxylase acyl carrier protein of Pseudomonas aeruginosa (strain LESB58).